A 162-amino-acid polypeptide reads, in one-letter code: Cyclic pyranopterin monophosphate synthase (162 aa).

Substrate is bound by residues 75 to 77 (LCH) and 113 to 114 (ME). Residue aspartate 128 is part of the active site.

This sequence belongs to the MoaC family. In terms of assembly, homohexamer; trimer of dimers.

It catalyses the reaction (8S)-3',8-cyclo-7,8-dihydroguanosine 5'-triphosphate = cyclic pyranopterin phosphate + diphosphate. The protein operates within cofactor biosynthesis; molybdopterin biosynthesis. Functionally, catalyzes the conversion of (8S)-3',8-cyclo-7,8-dihydroguanosine 5'-triphosphate to cyclic pyranopterin monophosphate (cPMP). The sequence is that of Cyclic pyranopterin monophosphate synthase from Burkholderia ambifaria (strain MC40-6).